The following is a 124-amino-acid chain: Modulator protein MzrA (124 aa).

Residues 1-7 (MINRRMK) are Cytoplasmic-facing. Residues 8–28 (TGFVFHLLLLLLPLVVLVTSS) traverse the membrane as a helical segment. The Periplasmic portion of the chain corresponds to 29–124 (RRTADDVTLH…KLSQQPFKLG (96 aa)).

The protein belongs to the MzrA family. In terms of assembly, interacts with EnvZ.

It localises to the cell inner membrane. Its function is as follows. Modulates the activity of the EnvZ/OmpR two-component regulatory system, probably by directly modulating EnvZ enzymatic activity and increasing stability of phosphorylated OmpR. The chain is Modulator protein MzrA from Musicola paradisiaca (strain Ech703) (Dickeya paradisiaca).